The chain runs to 116 residues: NADH-ubiquinone oxidoreductase chain 3 (116 aa).

3 helical membrane-spanning segments follow: residues 4–24 (LIIT…IAFW), 56–76 (FFLV…LLPL), and 88–108 (TLIL…YEWI).

It belongs to the complex I subunit 3 family. In terms of assembly, core subunit of respiratory chain NADH dehydrogenase (Complex I) which is composed of 45 different subunits. Interacts with TMEM186. Interacts with TMEM242.

The protein localises to the mitochondrion inner membrane. It carries out the reaction a ubiquinone + NADH + 5 H(+)(in) = a ubiquinol + NAD(+) + 4 H(+)(out). Its function is as follows. Core subunit of the mitochondrial membrane respiratory chain NADH dehydrogenase (Complex I) which catalyzes electron transfer from NADH through the respiratory chain, using ubiquinone as an electron acceptor. Essential for the catalytic activity of complex I. The protein is NADH-ubiquinone oxidoreductase chain 3 of Didelphis virginiana (North American opossum).